Here is a 544-residue protein sequence, read N- to C-terminus: CTP synthase (544 aa).

An amidoligase domain region spans residues 1–265 (MTKFIFVTGG…DNIITEQLQL (265 aa)). Ser13 contacts CTP. Residue Ser13 participates in UTP binding. Residues 14–19 (SLGKGI) and Asp71 each bind ATP. Mg(2+) is bound by residues Asp71 and Glu139. CTP contacts are provided by residues 146 to 148 (DIE), 186 to 191 (KTKPTQ), and Lys222. UTP is bound by residues 186 to 191 (KTKPTQ) and Lys222. One can recognise a Glutamine amidotransferase type-1 domain in the interval 290–544 (KIAMVGKYVD…VKAALNNKKA (255 aa)). Gly353 is a binding site for L-glutamine. The Nucleophile; for glutamine hydrolysis role is filled by Cys380. L-glutamine is bound by residues 381 to 384 (LGMQ), Glu404, and Arg471. Residues His517 and Glu519 contribute to the active site.

The protein belongs to the CTP synthase family. Homotetramer.

The catalysed reaction is UTP + L-glutamine + ATP + H2O = CTP + L-glutamate + ADP + phosphate + 2 H(+). The enzyme catalyses L-glutamine + H2O = L-glutamate + NH4(+). It catalyses the reaction UTP + NH4(+) + ATP = CTP + ADP + phosphate + 2 H(+). It participates in pyrimidine metabolism; CTP biosynthesis via de novo pathway; CTP from UDP: step 2/2. With respect to regulation, allosterically activated by GTP, when glutamine is the substrate; GTP has no effect on the reaction when ammonia is the substrate. The allosteric effector GTP functions by stabilizing the protein conformation that binds the tetrahedral intermediate(s) formed during glutamine hydrolysis. Inhibited by the product CTP, via allosteric rather than competitive inhibition. In terms of biological role, catalyzes the ATP-dependent amination of UTP to CTP with either L-glutamine or ammonia as the source of nitrogen. Regulates intracellular CTP levels through interactions with the four ribonucleotide triphosphates. The sequence is that of CTP synthase from Neisseria meningitidis serogroup C (strain 053442).